A 447-amino-acid chain; its full sequence is Putative branched-chain amino acid carrier protein SE_1090 (447 aa).

The next 12 helical transmembrane spans lie at 5 to 25, 40 to 60, 74 to 94, 114 to 134, 143 to 163, 193 to 213, 229 to 249, 290 to 310, 317 to 337, 350 to 370, 382 to 402, and 417 to 437; these read TWII…LIFP, ILAF…VGAL, PRFS…LFAI, GNLA…YLCL, IGSL…IKGF, GYLT…VNAI, IIAG…LGYI, LLGI…IVSV, ILPK…SFIL, VPVL…ILIA, IPLI…QGWI, and LEWF…SYFV.

The protein belongs to the branched chain amino acid transporter family.

It is found in the cell membrane. Functionally, component of the transport system for branched-chain amino acids (leucine, isoleucine and valine), which is coupled to a proton motive force. The polypeptide is Putative branched-chain amino acid carrier protein SE_1090 (Staphylococcus epidermidis (strain ATCC 12228 / FDA PCI 1200)).